We begin with the raw amino-acid sequence, 77 residues long: Protein AC145 (77 aa).

It localises to the host nucleus. It is found in the virion. Its function is as follows. Plays a role in primary oral infection of the host. The chain is Protein AC145 from Autographa californica nuclear polyhedrosis virus (AcMNPV).